Reading from the N-terminus, the 275-residue chain is Bis(5'-nucleosyl)-tetraphosphatase, symmetrical (275 aa).

It belongs to the Ap4A hydrolase family.

It carries out the reaction P(1),P(4)-bis(5'-adenosyl) tetraphosphate + H2O = 2 ADP + 2 H(+). Its function is as follows. Hydrolyzes diadenosine 5',5'''-P1,P4-tetraphosphate to yield ADP. In Haemophilus influenzae (strain PittGG), this protein is Bis(5'-nucleosyl)-tetraphosphatase, symmetrical.